A 155-amino-acid polypeptide reads, in one-letter code: Ribosome maturation factor RimP (155 aa).

This sequence belongs to the RimP family.

It localises to the cytoplasm. Its function is as follows. Required for maturation of 30S ribosomal subunits. The chain is Ribosome maturation factor RimP from Staphylococcus carnosus (strain TM300).